Reading from the N-terminus, the 443-residue chain is MEKTYHFTGIKGSGMSALALMLHQMGKNVQGSDSTDYFFTQRGLEQAGVPLLPFDEKNIKPEFELIVGNAFRDDNNVEIAFAHKNGFPFKRYHEFLGHFMEDFTSIGVAGAHGKTSTTGMLAHVMSNIVDTSYLIGDGTGRGNAGSEYFVFESDEYERHFMPYHPEYTIMTNIDFDHPDYFEGIEDVTSAFQDYANNIKKGIFAYGEDVNLRKLSAKAPIYYYGFEANDDYRAENLIRSTRGSSFDAYFRGEKIGHFVVPAYGKHNVLNALSVVAVCHNLGLDMTDVADHLLTFRGVKRRFTEKKVGETVIIDDFAHHPTEIEATLDAARQKYPDREIVAVFQPHTFTRTIAFADEFAEVLDHADTVYLAQIYGSAREVDHHEITAQDLADKVRKPAKVIELDNVSPLLDHDRGVYVFMGAGNIQKYEIAFEKLLSQTSTNLQ.

110-116 contacts ATP; that stretch reads GAHGKTS.

This sequence belongs to the MurCDEF family.

It localises to the cytoplasm. It catalyses the reaction UDP-N-acetyl-alpha-D-muramate + L-alanine + ATP = UDP-N-acetyl-alpha-D-muramoyl-L-alanine + ADP + phosphate + H(+). It functions in the pathway cell wall biogenesis; peptidoglycan biosynthesis. In terms of biological role, cell wall formation. This is UDP-N-acetylmuramate--L-alanine ligase from Lactococcus lactis subsp. cremoris (strain MG1363).